The chain runs to 467 residues: UDP-N-acetylmuramoylalanine--D-glutamate ligase (467 aa).

Residue 121-127 (GTNGKST) coordinates ATP.

The protein belongs to the MurCDEF family.

It is found in the cytoplasm. The enzyme catalyses UDP-N-acetyl-alpha-D-muramoyl-L-alanine + D-glutamate + ATP = UDP-N-acetyl-alpha-D-muramoyl-L-alanyl-D-glutamate + ADP + phosphate + H(+). It functions in the pathway cell wall biogenesis; peptidoglycan biosynthesis. Cell wall formation. Catalyzes the addition of glutamate to the nucleotide precursor UDP-N-acetylmuramoyl-L-alanine (UMA). This is UDP-N-acetylmuramoylalanine--D-glutamate ligase from Brucella suis biovar 1 (strain 1330).